A 335-amino-acid chain; its full sequence is (+)-caryolan-1-ol synthase (335 aa).

Positions 83, 87, 220, 224, and 228 each coordinate Mg(2+). The DDXXD motif signature appears at 83 to 87 (DDEFD). An NSE/DTE motif motif is present at residues 220 to 228 (NDICSFEKE).

The protein belongs to the terpene synthase family. It depends on Mg(2+) as a cofactor. Requires Mn(2+) as cofactor.

The enzyme catalyses (2E,6E)-farnesyl diphosphate = (+)-(E)-beta-caryophyllene + diphosphate. It carries out the reaction (+)-(E)-beta-caryophyllene + H2O = (+)-caryolan-1-ol. It participates in secondary metabolite biosynthesis; terpenoid biosynthesis. Its function is as follows. Sesquiterpene cyclase that first catalyzes the cyclization of farnesyl diphosphate (FPP) to the bicyclic sesquiterpene (+)-beta-caryophyllene intermediate, and then its conversion to (+)-caryolan-1-ol via a second cyclization and the addition of a water molecule. This Streptomyces griseus subsp. griseus (strain JCM 4626 / CBS 651.72 / NBRC 13350 / KCC S-0626 / ISP 5235) protein is (+)-caryolan-1-ol synthase (gcoA).